The following is a 434-amino-acid chain: Glutamyl-tRNA reductase (434 aa).

Residues 49-52, Ser-109, 114-116, and Gln-120 contribute to the substrate site; these read TCNR and EPQ. Cys-50 functions as the Nucleophile in the catalytic mechanism. NADP(+) is bound at residue 189 to 194; it reads GAGEMC.

The protein belongs to the glutamyl-tRNA reductase family. As to quaternary structure, homodimer.

It catalyses the reaction (S)-4-amino-5-oxopentanoate + tRNA(Glu) + NADP(+) = L-glutamyl-tRNA(Glu) + NADPH + H(+). Its pathway is porphyrin-containing compound metabolism; protoporphyrin-IX biosynthesis; 5-aminolevulinate from L-glutamyl-tRNA(Glu): step 1/2. Functionally, catalyzes the NADPH-dependent reduction of glutamyl-tRNA(Glu) to glutamate 1-semialdehyde (GSA). This is Glutamyl-tRNA reductase from Geotalea daltonii (strain DSM 22248 / JCM 15807 / FRC-32) (Geobacter daltonii).